Consider the following 233-residue polypeptide: Uracil-DNA glycosylase (233 aa).

Residue Asp-70 is the Proton acceptor of the active site.

The protein belongs to the uracil-DNA glycosylase (UDG) superfamily. UNG family.

The protein localises to the cytoplasm. It catalyses the reaction Hydrolyzes single-stranded DNA or mismatched double-stranded DNA and polynucleotides, releasing free uracil.. Its function is as follows. Excises uracil residues from the DNA which can arise as a result of misincorporation of dUMP residues by DNA polymerase or due to deamination of cytosine. This Oleidesulfovibrio alaskensis (strain ATCC BAA-1058 / DSM 17464 / G20) (Desulfovibrio alaskensis) protein is Uracil-DNA glycosylase.